The sequence spans 931 residues: Bifunctional uridylyltransferase/uridylyl-removing enzyme (931 aa).

The uridylyltransferase stretch occupies residues 1-383 (MDSVATDSKA…TTGSTWRRVP (383 aa)). The tract at residues 384–739 (ESDDFIVDNN…VGFDPARGVT (356 aa)) is uridylyl-removing. In terms of domain architecture, HD spans 499–622 (VDEHLIRCIG…VQSVEQMKLL (124 aa)). ACT domains follow at residues 740–822 (ELTI…AVAR) and 851–931 (VIEV…QPAA).

It belongs to the GlnD family. Mg(2+) is required as a cofactor.

The catalysed reaction is [protein-PII]-L-tyrosine + UTP = [protein-PII]-uridylyl-L-tyrosine + diphosphate. It catalyses the reaction [protein-PII]-uridylyl-L-tyrosine + H2O = [protein-PII]-L-tyrosine + UMP + H(+). With respect to regulation, uridylyltransferase (UTase) activity is inhibited by glutamine, while glutamine activates uridylyl-removing (UR) activity. In terms of biological role, modifies, by uridylylation and deuridylylation, the PII regulatory proteins (GlnB and homologs), in response to the nitrogen status of the cell that GlnD senses through the glutamine level. Under low glutamine levels, catalyzes the conversion of the PII proteins and UTP to PII-UMP and PPi, while under higher glutamine levels, GlnD hydrolyzes PII-UMP to PII and UMP (deuridylylation). Thus, controls uridylylation state and activity of the PII proteins, and plays an important role in the regulation of nitrogen fixation and metabolism. The polypeptide is Bifunctional uridylyltransferase/uridylyl-removing enzyme (Bradyrhizobium sp. (strain ORS 278)).